A 254-amino-acid chain; its full sequence is tRNA (guanine-N(7)-)-methyltransferase (254 aa).

The segment at M1–G34 is disordered. Positions 87, 112, 139, and 162 each coordinate S-adenosyl-L-methionine. D162 is an active-site residue. Residues K166, D198, and T233–E236 each bind substrate.

It belongs to the class I-like SAM-binding methyltransferase superfamily. TrmB family.

It catalyses the reaction guanosine(46) in tRNA + S-adenosyl-L-methionine = N(7)-methylguanosine(46) in tRNA + S-adenosyl-L-homocysteine. It participates in tRNA modification; N(7)-methylguanine-tRNA biosynthesis. In terms of biological role, catalyzes the formation of N(7)-methylguanine at position 46 (m7G46) in tRNA. This chain is tRNA (guanine-N(7)-)-methyltransferase, found in Bordetella pertussis (strain Tohama I / ATCC BAA-589 / NCTC 13251).